The following is a 190-amino-acid chain: dITP/XTP pyrophosphatase (190 aa).

Substrate is bound at residue T10–K15. Mg(2+)-binding residues include E39 and D68. The Proton acceptor role is filled by D68. Substrate-binding positions include A69, F143–D146, K166, and H171–R172.

The protein belongs to the HAM1 NTPase family. Homodimer. Requires Mg(2+) as cofactor.

It catalyses the reaction XTP + H2O = XMP + diphosphate + H(+). The enzyme catalyses dITP + H2O = dIMP + diphosphate + H(+). The catalysed reaction is ITP + H2O = IMP + diphosphate + H(+). Its function is as follows. Pyrophosphatase that catalyzes the hydrolysis of nucleoside triphosphates to their monophosphate derivatives, with a high preference for the non-canonical purine nucleotides XTP (xanthosine triphosphate), dITP (deoxyinosine triphosphate) and ITP. Seems to function as a house-cleaning enzyme that removes non-canonical purine nucleotides from the nucleotide pool, thus preventing their incorporation into DNA/RNA and avoiding chromosomal lesions. This Hyperthermus butylicus (strain DSM 5456 / JCM 9403 / PLM1-5) protein is dITP/XTP pyrophosphatase.